Here is a 227-residue protein sequence, read N- to C-terminus: Cytidylate kinase (227 aa).

12–20 (GPSGAGKGT) is a binding site for ATP.

This sequence belongs to the cytidylate kinase family. Type 1 subfamily.

It localises to the cytoplasm. The catalysed reaction is CMP + ATP = CDP + ADP. It carries out the reaction dCMP + ATP = dCDP + ADP. This Shigella sonnei (strain Ss046) protein is Cytidylate kinase.